A 152-amino-acid chain; its full sequence is UPF0260 protein BR1477/BS1330_I1471 (152 aa).

Belongs to the UPF0260 family.

The sequence is that of UPF0260 protein BR1477/BS1330_I1471 from Brucella suis biovar 1 (strain 1330).